A 132-amino-acid polypeptide reads, in one-letter code: NADPH-dependent 7-cyano-7-deazaguanine reductase (132 aa).

Cysteine 43 acts as the Thioimide intermediate in catalysis. The active-site Proton donor is aspartate 50. Residues 65 to 67 (VEL) and 84 to 85 (HE) contribute to the substrate site.

The protein belongs to the GTP cyclohydrolase I family. QueF type 1 subfamily.

Its subcellular location is the cytoplasm. The enzyme catalyses 7-aminomethyl-7-carbaguanine + 2 NADP(+) = 7-cyano-7-deazaguanine + 2 NADPH + 3 H(+). Its pathway is tRNA modification; tRNA-queuosine biosynthesis. Its function is as follows. Catalyzes the NADPH-dependent reduction of 7-cyano-7-deazaguanine (preQ0) to 7-aminomethyl-7-deazaguanine (preQ1). In Thermosynechococcus vestitus (strain NIES-2133 / IAM M-273 / BP-1), this protein is NADPH-dependent 7-cyano-7-deazaguanine reductase.